We begin with the raw amino-acid sequence, 170 residues long: Large ribosomal subunit protein bL17 (170 aa).

Residues 134–144 are compositionally biased toward low complexity; it reads ASAKAAQAQEK. The segment at 134 to 170 is disordered; sequence ASAKAAQAQEKPAQEEEVEATSDEVAYTSEPDKAAEH.

Belongs to the bacterial ribosomal protein bL17 family. In terms of assembly, part of the 50S ribosomal subunit. Contacts protein L32.

The chain is Large ribosomal subunit protein bL17 from Mycobacterium leprae (strain Br4923).